We begin with the raw amino-acid sequence, 293 residues long: Ribosomal protein L11 methyltransferase (293 aa).

S-adenosyl-L-methionine is bound by residues threonine 145, glycine 166, aspartate 188, and asparagine 230.

Belongs to the methyltransferase superfamily. PrmA family.

It is found in the cytoplasm. It catalyses the reaction L-lysyl-[protein] + 3 S-adenosyl-L-methionine = N(6),N(6),N(6)-trimethyl-L-lysyl-[protein] + 3 S-adenosyl-L-homocysteine + 3 H(+). Functionally, methylates ribosomal protein L11. This chain is Ribosomal protein L11 methyltransferase, found in Shewanella halifaxensis (strain HAW-EB4).